The sequence spans 244 residues: Proteasome subunit alpha (244 aa).

It belongs to the peptidase T1A family. In terms of assembly, the 20S proteasome core is composed of 14 alpha and 14 beta subunits that assemble into four stacked heptameric rings, resulting in a barrel-shaped structure. The two inner rings, each composed of seven catalytic beta subunits, are sandwiched by two outer rings, each composed of seven alpha subunits. The catalytic chamber with the active sites is on the inside of the barrel. Has a gated structure, the ends of the cylinder being occluded by the N-termini of the alpha-subunits. Is capped by the proteasome-associated ATPase, ARC.

The protein localises to the cytoplasm. Its pathway is protein degradation; proteasomal Pup-dependent pathway. Its activity is regulated as follows. The formation of the proteasomal ATPase ARC-20S proteasome complex, likely via the docking of the C-termini of ARC into the intersubunit pockets in the alpha-rings, may trigger opening of the gate for substrate entry. Interconversion between the open-gate and close-gate conformations leads to a dynamic regulation of the 20S proteasome proteolysis activity. Its function is as follows. Component of the proteasome core, a large protease complex with broad specificity involved in protein degradation. The polypeptide is Proteasome subunit alpha (Xylanimonas cellulosilytica (strain DSM 15894 / JCM 12276 / CECT 5975 / KCTC 9989 / LMG 20990 / NBRC 107835 / XIL07)).